The following is a 69-amino-acid chain: Antimicrobial peptide ISAMP (69 aa).

The first 23 residues, 1–23, serve as a signal peptide directing secretion; the sequence is MRAVAIFIVTLLVLECVYFVMSE.

In terms of tissue distribution, expressed in the fat body, hemocytes and salivary glands of partially-fed female ticks. Not expressed in the midgut.

The protein localises to the secreted. Its function is as follows. Has antimicrobial activity against B.cereus (MIC=5.8 ug/ml), B.subtilis (MIC=12.3 ug/ml), S.aureus (MIC=10.4 ug/ml), E.coli Edl 933 (MIC=3.2 ug/ml) and E.coli MG/655 (MIC=4.2 ug/ml). Non-hemolytic. This Ixodes scapularis (Black-legged tick) protein is Antimicrobial peptide ISAMP.